The chain runs to 369 residues: Biglycan (369 aa).

Positions 1 to 16 (MCPLWLLTLLLALSQA) are cleaved as a signal peptide. Residues 17–37 (LPFEQKGFWDFTLDDGLLMMN) constitute a propeptide that is removed on maturation. O-linked (Xyl...) (glycosaminoglycan) serine glycans are attached at residues Ser42 and Ser48. Disulfide bonds link Cys64–Cys70 and Cys68–Cys77. 12 LRR repeats span residues 83–103 (KTVP…NNDI), 104–127 (SELR…NNKI), 128–151 (SKIH…KNHL), 152–172 (VEIP…DNRI), 173–196 (RKVP…GNPL), 197–221 (ENSG…EAKL), 222–242 (TGIP…HNKI), 243–266 (QAIE…HNQI), 267–290 (RMIE…NNKL), 291–313 (SRVP…SNNI), 314–343 (TKVG…NNPV), and 344–369 (PYWE…NYKK). Asn271 and Asn312 each carry an N-linked (GlcNAc...) asparagine glycan. Cys322 and Cys355 form a disulfide bridge.

Belongs to the small leucine-rich proteoglycan (SLRP) family. SLRP class I subfamily. Post-translationally, the two attached glycosaminoglycan chains can be either chondroitin sulfate or dermatan sulfate. As to expression, found in several connective tissues, especially in articular cartilages.

The protein localises to the secreted. It localises to the extracellular space. Its subcellular location is the extracellular matrix. May be involved in collagen fiber assembly. The polypeptide is Biglycan (Bgn) (Mus musculus (Mouse)).